The chain runs to 429 residues: UDP-N-acetylglucosamine 1-carboxyvinyltransferase (429 aa).

22–23 (KN) serves as a coordination point for phosphoenolpyruvate. Arg-102 contributes to the UDP-N-acetyl-alpha-D-glucosamine binding site. Cys-126 serves as the catalytic Proton donor. At Cys-126 the chain carries 2-(S-cysteinyl)pyruvic acid O-phosphothioketal. UDP-N-acetyl-alpha-D-glucosamine contacts are provided by residues 171-174 (KVSV), Asp-316, and Ile-338.

The protein belongs to the EPSP synthase family. MurA subfamily.

The protein localises to the cytoplasm. It catalyses the reaction phosphoenolpyruvate + UDP-N-acetyl-alpha-D-glucosamine = UDP-N-acetyl-3-O-(1-carboxyvinyl)-alpha-D-glucosamine + phosphate. It participates in cell wall biogenesis; peptidoglycan biosynthesis. Its function is as follows. Cell wall formation. Adds enolpyruvyl to UDP-N-acetylglucosamine. The chain is UDP-N-acetylglucosamine 1-carboxyvinyltransferase from Xanthobacter autotrophicus (strain ATCC BAA-1158 / Py2).